We begin with the raw amino-acid sequence, 1164 residues long: Protein PLASTID MOVEMENT IMPAIRED 1-RELATED 1 (1164 aa).

Positions 30–54 (KNPRGSVAGSNKTPTKPLSRSNLAE) are disordered. The span at 37–51 (AGSNKTPTKPLSRSN) shows a compositional bias: polar residues. The region spanning 69–217 (INHVRNRRFN…TLSMSFGYTV (149 aa)) is the C2 NT-type domain. Over residues 224 to 263 (PASSGSTQNFRSSSNVKQTSNNTGLTRAISAKSSLGNGKS) the composition is skewed to polar residues. 4 disordered regions span residues 224-268 (PASS…SRRY), 466-486 (APEE…PKDA), 1038-1063 (SELK…PMEE), and 1124-1164 (GSAK…IMPK). Basic and acidic residues-rich tracts occupy residues 469–486 (EGNK…PKDA) and 1052–1062 (SDAKKEEKPME).

Its subcellular location is the cytoplasm. Its function is as follows. Together with PMI1, necessary for chloroplast and nuclear photorelocation movements via the regulation of chloroplast-actin (cp-actin) filaments in pavement cells. The protein is Protein PLASTID MOVEMENT IMPAIRED 1-RELATED 1 of Arabidopsis thaliana (Mouse-ear cress).